Here is a 205-residue protein sequence, read N- to C-terminus: Urease accessory protein UreG (205 aa).

Residue 14 to 21 (GPVGSGKT) coordinates GTP.

Homodimer. UreD, UreF and UreG form a complex that acts as a GTP-hydrolysis-dependent molecular chaperone, activating the urease apoprotein by helping to assemble the nickel containing metallocenter of UreC. The UreE protein probably delivers the nickel.

It localises to the cytoplasm. Its activity is regulated as follows. Activation of apourease within the UreDFG-apoprotein complex is inhibited by zinc, copper and cobalt. Functionally, facilitates the functional incorporation of the urease nickel metallocenter. This process requires GTP hydrolysis, probably effectuated by UreG. In Klebsiella aerogenes (Enterobacter aerogenes), this protein is Urease accessory protein UreG.